Reading from the N-terminus, the 92-residue chain is uncharacterized protein (92 aa).

This is an uncharacterized protein from Schizosaccharomyces pombe (strain 972 / ATCC 24843) (Fission yeast).